The primary structure comprises 438 residues: Phosphatidylserine decarboxylase proenzyme 1, mitochondrial (438 aa).

The transit peptide at 1–21 (MRRFRVWPPSPSPWPLLASRP) directs the protein to the mitochondrion. At 22–48 (CPHSHHHRSPFHASANSGARQGNFILP) the chain is on the mitochondrial matrix side. Residues 49-67 (GATAATLVMFGILHARRMY) form a helical membrane-spanning segment. At 68 to 438 (EDQKVVERKE…EAIGRWTSRE (371 aa)) the chain is on the mitochondrial intermembrane side. Active-site charge relay system; for autoendoproteolytic cleavage activity residues include D173, H273, and S387. S387 functions as the Schiff-base intermediate with substrate; via pyruvic acid; for decarboxylase activity in the catalytic mechanism. S387 is subject to Pyruvic acid (Ser); by autocatalysis.

The protein belongs to the phosphatidylserine decarboxylase family. PSD-B subfamily. Eukaryotic type I sub-subfamily. Heterodimer of a large membrane-associated beta subunit and a small pyruvoyl-containing alpha subunit. Pyruvate is required as a cofactor. In terms of processing, is synthesized initially as an inactive proenzyme. Formation of the active enzyme involves a self-maturation process in which the active site pyruvoyl group is generated from an internal serine residue via an autocatalytic post-translational modification. Two non-identical subunits are generated from the proenzyme in this reaction, and the pyruvate is formed at the N-terminus of the alpha chain, which is derived from the carboxyl end of the proenzyme. The autoendoproteolytic cleavage occurs by a canonical serine protease mechanism, in which the side chain hydroxyl group of the serine supplies its oxygen atom to form the C-terminus of the beta chain, while the remainder of the serine residue undergoes an oxidative deamination to produce ammonia and the pyruvoyl prosthetic group on the alpha chain. During this reaction, the Ser that is part of the protease active site of the proenzyme becomes the pyruvoyl prosthetic group, which constitutes an essential element of the active site of the mature decarboxylase.

The protein resides in the mitochondrion inner membrane. The enzyme catalyses a 1,2-diacyl-sn-glycero-3-phospho-L-serine + H(+) = a 1,2-diacyl-sn-glycero-3-phosphoethanolamine + CO2. The protein operates within phospholipid metabolism; phosphatidylethanolamine biosynthesis; phosphatidylethanolamine from CDP-diacylglycerol: step 2/2. Catalyzes the formation of phosphatidylethanolamine (PtdEtn) from phosphatidylserine (PtdSer). Plays a central role in phospholipid metabolism and in the interorganelle trafficking of phosphatidylserine. The chain is Phosphatidylserine decarboxylase proenzyme 1, mitochondrial (PSD1) from Oryza sativa subsp. japonica (Rice).